Reading from the N-terminus, the 136-residue chain is Protein NrdI (136 aa).

The protein belongs to the NrdI family.

Functionally, probably involved in ribonucleotide reductase function. The chain is Protein NrdI from Salmonella newport (strain SL254).